Here is a 368-residue protein sequence, read N- to C-terminus: Glycoprotein UL18 (368 aa).

The first 18 residues, 1–18 (MMTMWCLTLFVLWMLRVV), serve as a signal peptide directing secretion. The tract at residues 19–114 (GMHVLRYGYT…EIALGYRSQS (96 aa)) is alpha-1-like. N-linked (GlcNAc...) asparagine; by host glycosylation is found at Asn-56, Asn-66, Asn-74, Asn-95, Asn-123, Asn-127, Asn-150, Asn-167, Asn-177, Asn-193, Asn-240, Asn-282, and Asn-291. Residues 115 to 208 (VLTWTHECNT…VIYSGFQPPV (94 aa)) form an alpha-2-like region. The interval 209–303 (THPVVKGGVR…VEIPISVTSP (95 aa)) is alpha-3-like. A helical membrane pass occupies residues 321 to 342 (YNTMTISSVLLALLLCALLFAF).

In terms of assembly, interacts with host LILRB1.

It is found in the host membrane. Functionally, plays a role in the protection against host NK cell cytotoxicity by interacting with and modulating the activity of the host inhibitory leukocyte Ig-like receptor 1/LILRB1, which is expressed on monocytes, dendritic cells, as well as subsets of T and NK cells. UL18 exerts an inhibitory effect on LIR-1+ NK cells, while it stimulates LIR-1- NK cell. These modulations prevent lysis of the infected cells by NK cells. The chain is Glycoprotein UL18 (H301) from Homo sapiens (Human).